We begin with the raw amino-acid sequence, 44 residues long: Phycoerythrin alpha-1 chain (44 aa).

The segment at 1–44 (AMDKSAKAPQITIFDHRGCSRAPKSETGGTATKDDQMMVKVSQV) is disordered. Lys-4 bears the 5-hydroxylysine mark. 2 residues coordinate 15,16-dihydrobiliverdin: Cys-19 and Arg-21. The segment at 24–26 (KSE) is 15,16-dihydrobiliverdin chromophore. Residue Lys-40 coordinates 15,16-dihydrobiliverdin.

Belongs to the phycoerythrin family. Heterotetramer of 2 different alpha chains and 2 identical beta chains. The subunit composition could comprise of any combination of 2 out of 4 different alpha units with an invariant beta unit. Contains one covalently linked 15,16-dihydrobiliverdin chromophore.

The protein localises to the plastid. It localises to the chloroplast thylakoid membrane. Light-harvesting photosynthetic tetrapyrrole chromophore-protein from the phycobiliprotein complex. The polypeptide is Phycoerythrin alpha-1 chain (cpeA1) (Rhodomonas sp. (strain CS 24) (Chroomonas sp. (strain CS24))).